We begin with the raw amino-acid sequence, 389 residues long: Indole-3-acetate monooxygenase (389 aa).

The protein belongs to the HpaH/HsaA monooxygenase family.

It carries out the reaction (indol-3-yl)acetate + NADH + O2 + H(+) = 2-hydroxy-(1H-indol-3-yl)acetate + NAD(+) + H2O. It catalyses the reaction indole + NADH + O2 + H(+) = indoxyl + NAD(+) + H2O. Functionally, involved in the degradation of the plant hormone indole-3-acetic acid (IAA). Catalyzes the first step of the pathway, the conversion of IAA to 2-hydroxy-IAA (2-OH-IAA). Can also convert indole to indoxyl, which spontaneously dimerizes in the presence of oxygen to form the blue pigment indigo. The sequence is that of Indole-3-acetate monooxygenase from Pseudomonas putida (Arthrobacter siderocapsulatus).